The chain runs to 142 residues: Large ribosomal subunit protein uL13 (142 aa).

The protein belongs to the universal ribosomal protein uL13 family. In terms of assembly, part of the 50S ribosomal subunit.

Functionally, this protein is one of the early assembly proteins of the 50S ribosomal subunit, although it is not seen to bind rRNA by itself. It is important during the early stages of 50S assembly. This chain is Large ribosomal subunit protein uL13, found in Alteromonas mediterranea (strain DSM 17117 / CIP 110805 / LMG 28347 / Deep ecotype).